The primary structure comprises 3373 residues: Intermembrane lipid transfer protein vps13A (3373 aa).

The region spanning Phe3 to Glu119 is the Chorein N-terminal domain. 5 disordered regions span residues Pro818–Ser858, Val1028–Ser1096, Asn1259–Lys1304, Asp1648–Lys1729, and Gln1872–Asp1913. Positions Thr823–Ile839 are enriched in polar residues. Composition is skewed to low complexity over residues Ser840–Ser858 and Ser1048–Gln1066. 2 stretches are compositionally biased toward basic and acidic residues: residues Ser1263–Leu1274 and Arg1288–Lys1304. Composition is skewed to low complexity over residues Gln1659–Ser1685, Ser1695–Ser1716, and Ser1884–Ser1898. Positions Phe1899 to Ser1909 are enriched in polar residues. The region spanning Thr2405–Glu2706 is the SHR-BD domain. The tract at residues Arg2909–Gly2933 is disordered. Residues Asn2911–Asn2920 show a composition bias toward low complexity.

It belongs to the VPS13 family.

The protein resides in the membrane. Mediates the transfer of lipids between membranes at organelle contact sites. The chain is Intermembrane lipid transfer protein vps13A (vps13A) from Dictyostelium discoideum (Social amoeba).